The sequence spans 837 residues: MANILKTIIENDKGEIRRLEKMADKVFKYEDQMAALTDDQLKAKTVEFKERYQNGESLDSLLYEAFAVVREGAKRVLGLFPYKVQVMGGIVLHHGDVPEMRTGEGKTLTATMPVYLNALSGKGVHVVTVNEYLSERDATEMGELYSWLGLSVGINLATKSPMEKKEAYECDITYSTNSEIGFDYLRDNMVVRAENMVQRPLNYALVDEVDSILIDEARTPLIVSGANAVETSQLYHMADHYVKSLNKDDYIIDVQSKTIGLSDSGIDRAESYFKLENLYDIENVALTHFIDNALRANYIMLLDIDYVVSEEQEILIVDQFTGRTMEGRRYSDGLHQAIEAKEGVPIQDETKTSASITYQNLFRMYKKLSGMTGTGKTEEEEFREIYNIRVIPIPTNRPVQRIDHSDLLYASIESKFKAVVEDVKARYQKGQPVLVGTVAVETSDYISKKLVAAGVPHEVLNAKNHYREAQIIMNAGQRGAVTIATNMAGRGTDIKLGEGVRELGGLCVIGTERHESRRIDNQLRGRSGRQGDPGESQFYLSLEDDLMKRFGSERLKGIFERLNMSEEAIESRMLTRQVEAAQKRVEGNNYDTRKQVLQYDDVMREQREIIYAQRYDVITADRDLAPEIQAMIKRTIERVVDGHARAKQDEKLEAILNFAKYNLLPEDSITMEDLSGLSDKAIKEELFQRALKVYDSQVSKLRDEEAVKEFQKVLILRVVDNKWTDHIDALDQLRNAVGLRGYAQNNPVVEYQAEGFRMFNDMIGSIEFDVTRLMMKAQIHEQERPQAERHISTTATRNIAAHQASMPEDLDLNQIGRNELCPCGSGKKFKNCHGKRQ.

ATP-binding positions include Gln-85, 103-107 (GEGKT), and Asp-493. Zn(2+)-binding residues include Cys-821, Cys-823, Cys-832, and His-833.

This sequence belongs to the SecA family. As to quaternary structure, monomer and homodimer. Part of the essential Sec protein translocation apparatus which comprises SecA, SecYEG and auxiliary proteins SecDF. Other proteins may also be involved. Zn(2+) serves as cofactor.

It localises to the cell membrane. The protein resides in the cytoplasm. It carries out the reaction ATP + H2O + cellular proteinSide 1 = ADP + phosphate + cellular proteinSide 2.. In terms of biological role, part of the Sec protein translocase complex. Interacts with the SecYEG preprotein conducting channel. Has a central role in coupling the hydrolysis of ATP to the transfer of proteins into and across the cell membrane, serving as an ATP-driven molecular motor driving the stepwise translocation of polypeptide chains across the membrane. The polypeptide is Protein translocase subunit SecA (Streptococcus pneumoniae serotype 2 (strain D39 / NCTC 7466)).